Reading from the N-terminus, the 89-residue chain is Small ribosomal subunit protein bS20 (89 aa).

The disordered stretch occupies residues 1–20 (MANHKSAEKRARQTIKRTER).

Belongs to the bacterial ribosomal protein bS20 family.

In terms of biological role, binds directly to 16S ribosomal RNA. This Campylobacter concisus (strain 13826) protein is Small ribosomal subunit protein bS20.